A 445-amino-acid chain; its full sequence is Tubulin beta-2 chain (445 aa).

Gln12, Glu73, Ser142, Gly146, Thr147, Gly148, Asn208, and Asn230 together coordinate GTP. Glu73 lines the Mg(2+) pocket.

This sequence belongs to the tubulin family. Dimer of alpha and beta chains. A typical microtubule is a hollow water-filled tube with an outer diameter of 25 nm and an inner diameter of 15 nM. Alpha-beta heterodimers associate head-to-tail to form protofilaments running lengthwise along the microtubule wall with the beta-tubulin subunit facing the microtubule plus end conferring a structural polarity. Microtubules usually have 13 protofilaments but different protofilament numbers can be found in some organisms and specialized cells. It depends on Mg(2+) as a cofactor.

Its subcellular location is the cytoplasm. The protein resides in the cytoskeleton. In terms of biological role, tubulin is the major constituent of microtubules, a cylinder consisting of laterally associated linear protofilaments composed of alpha- and beta-tubulin heterodimers. Microtubules grow by the addition of GTP-tubulin dimers to the microtubule end, where a stabilizing cap forms. Below the cap, tubulin dimers are in GDP-bound state, owing to GTPase activity of alpha-tubulin. The protein is Tubulin beta-2 chain (TUBB2) of Suillus bovinus (Jersey cow bolete).